The following is a 509-amino-acid chain: ATP synthase subunit alpha (509 aa).

169-176 (GDRQTGKT) is an ATP binding site.

Belongs to the ATPase alpha/beta chains family. As to quaternary structure, F-type ATPases have 2 components, CF(1) - the catalytic core - and CF(0) - the membrane proton channel. CF(1) has five subunits: alpha(3), beta(3), gamma(1), delta(1), epsilon(1). CF(0) has three main subunits: a(1), b(2) and c(9-12). The alpha and beta chains form an alternating ring which encloses part of the gamma chain. CF(1) is attached to CF(0) by a central stalk formed by the gamma and epsilon chains, while a peripheral stalk is formed by the delta and b chains.

The protein localises to the cell inner membrane. It carries out the reaction ATP + H2O + 4 H(+)(in) = ADP + phosphate + 5 H(+)(out). Produces ATP from ADP in the presence of a proton gradient across the membrane. The alpha chain is a regulatory subunit. The sequence is that of ATP synthase subunit alpha from Brucella anthropi (strain ATCC 49188 / DSM 6882 / CCUG 24695 / JCM 21032 / LMG 3331 / NBRC 15819 / NCTC 12168 / Alc 37) (Ochrobactrum anthropi).